Consider the following 414-residue polypeptide: MRSWPAPEVPNLPEAGLPGPALPLHLHDTATGTVRPTRPGPTARMYVCGITPYDATHLGHAATYLAFDLVNRVWRDGGHKVCYVQNVTDVDDPLLERAEQTGQDWRELADREIALFRDDMTALRILPPDHYVGAVEAIPLIVEMIERLRSRGAVYEVNGDLYFPISADPDFGRVSGLTTEQMLPLFAERGGDPQRRGKKDPLDALLWRAQRPGEPSWESPFGPGRPGWHVECSAISIHHLGMAFDVEGGGSDLAFPHHEMSASHAQVATGRHPHAKAYVHTGMVGLDGQKMSKSLGNLVFVSRLRADGADPMAVRLALLAHHYRSDWEWTGEDLPRATARLERWRAAVQLPAGPPAAAVAAEVRRHLSQDLDAPSALVTVDRWAEQALAGAGERDPAAPAQVRAVVDALLGVAL.

The disordered stretch occupies residues 1-38 (MRSWPAPEVPNLPEAGLPGPALPLHLHDTATGTVRPTR). Over residues 11 to 38 (NLPEAGLPGPALPLHLHDTATGTVRPTR) the composition is skewed to low complexity. Residue cysteine 48 participates in Zn(2+) binding. L-cysteinyl-5'-AMP is bound by residues 48–51 (CGIT), threonine 63, and 86–88 (NVT). The short motif at 50–60 (ITPYDATHLGH) is the 'HIGH' region element. The short motif at 188-193 (ERGGDP) is the 'ERGGDP' region element. Tryptophan 228 serves as a coordination point for L-cysteinyl-5'-AMP. Cysteine 232 is a binding site for Zn(2+). 250–252 (GSD) is an L-cysteinyl-5'-AMP binding site. Histidine 257 contacts Zn(2+). Valine 284 provides a ligand contact to L-cysteinyl-5'-AMP. The 'KMSKS' region signature appears at 290–294 (KMSKS).

It belongs to the class-I aminoacyl-tRNA synthetase family. MshC subfamily. In terms of assembly, monomer. Zn(2+) is required as a cofactor.

The catalysed reaction is 1D-myo-inositol 2-amino-2-deoxy-alpha-D-glucopyranoside + L-cysteine + ATP = 1D-myo-inositol 2-(L-cysteinylamino)-2-deoxy-alpha-D-glucopyranoside + AMP + diphosphate + H(+). Functionally, catalyzes the ATP-dependent condensation of GlcN-Ins and L-cysteine to form L-Cys-GlcN-Ins. This Thermomonospora curvata (strain ATCC 19995 / DSM 43183 / JCM 3096 / KCTC 9072 / NBRC 15933 / NCIMB 10081 / Henssen B9) protein is L-cysteine:1D-myo-inositol 2-amino-2-deoxy-alpha-D-glucopyranoside ligase.